Here is a 302-residue protein sequence, read N- to C-terminus: NAD kinase 2 (302 aa).

D78 functions as the Proton acceptor in the catalytic mechanism. NAD(+)-binding positions include 78 to 79 (DG), 152 to 153 (NE), D182, 193 to 198 (TAYALS), and A217.

This sequence belongs to the NAD kinase family. A divalent metal cation is required as a cofactor.

The protein localises to the cytoplasm. The catalysed reaction is NAD(+) + ATP = ADP + NADP(+) + H(+). Functionally, involved in the regulation of the intracellular balance of NAD and NADP, and is a key enzyme in the biosynthesis of NADP. Catalyzes specifically the phosphorylation on 2'-hydroxyl of the adenosine moiety of NAD to yield NADP. The protein is NAD kinase 2 of Parasynechococcus marenigrum (strain WH8102).